The primary structure comprises 726 residues: Catalase-peroxidase (726 aa).

The tract at residues 1–34 is disordered; sequence MSMSDDTHNSLSTGKCPFHQGSHDRSAGAGTSSH. A cross-link (tryptophyl-tyrosyl-methioninium (Trp-Tyr) (with M-252)) is located at residues 105-226; sequence WHGAGTYRSV…LGATEMGLIY (122 aa). The active-site Proton acceptor is the His-106. The segment at residues 226 to 252 is a cross-link (tryptophyl-tyrosyl-methioninium (Tyr-Met) (with W-105)); it reads YVNPEGPDHSGEPLSAAAAIRATFGNM. His-267 is a heme b binding site.

It belongs to the peroxidase family. Peroxidase/catalase subfamily. As to quaternary structure, homodimer or homotetramer. Heme b is required as a cofactor. In terms of processing, formation of the three residue Trp-Tyr-Met cross-link is important for the catalase, but not the peroxidase activity of the enzyme.

It carries out the reaction H2O2 + AH2 = A + 2 H2O. It catalyses the reaction 2 H2O2 = O2 + 2 H2O. Bifunctional enzyme with both catalase and broad-spectrum peroxidase activity. The sequence is that of Catalase-peroxidase from Citrobacter koseri (strain ATCC BAA-895 / CDC 4225-83 / SGSC4696).